The sequence spans 411 residues: 1-deoxy-D-xylulose 5-phosphate reductoisomerase (411 aa).

NADPH contacts are provided by Thr-11, Gly-12, Ser-13, Ile-14, and Asn-124. Lys-125 provides a ligand contact to 1-deoxy-D-xylulose 5-phosphate. Residue Glu-126 participates in NADPH binding. Mn(2+) is bound at residue Asp-150. Residues Ser-151, Glu-152, Ser-186, and His-209 each contribute to the 1-deoxy-D-xylulose 5-phosphate site. Glu-152 provides a ligand contact to Mn(2+). Gly-215 lines the NADPH pocket. Residues Ser-222, Asn-227, Lys-228, and Glu-231 each coordinate 1-deoxy-D-xylulose 5-phosphate. Mn(2+) is bound at residue Glu-231.

This sequence belongs to the DXR family. It depends on Mg(2+) as a cofactor. Requires Mn(2+) as cofactor.

It carries out the reaction 2-C-methyl-D-erythritol 4-phosphate + NADP(+) = 1-deoxy-D-xylulose 5-phosphate + NADPH + H(+). It functions in the pathway isoprenoid biosynthesis; isopentenyl diphosphate biosynthesis via DXP pathway; isopentenyl diphosphate from 1-deoxy-D-xylulose 5-phosphate: step 1/6. In terms of biological role, catalyzes the NADPH-dependent rearrangement and reduction of 1-deoxy-D-xylulose-5-phosphate (DXP) to 2-C-methyl-D-erythritol 4-phosphate (MEP). This is 1-deoxy-D-xylulose 5-phosphate reductoisomerase from Psychrobacter sp. (strain PRwf-1).